Consider the following 275-residue polypeptide: MASYPNGQSCPGAAGQVPGVPPGGYYPGPPHGGGQYGSGLPPGGGYGAPAPGGPYGYPSAGGVPSGTPSGPYGGIPPGGPYGQLPPGGPYGTQPGHYGQGGVPPNVDPEAYSWFQSVDADHSGYISLKELKQALVNSNWSSFNDETCLMMINMFDKTKSGRIDVAGFSALWKFLQQWRNLFQQYDRDRSGSISSTELQQALSQMGYNLSPQFTQLLVSRYCARSAIPAMQLDCFIKVCTQLQVLTEAFREKDTAVQGNIRLSFEDFVTMTASRML.

8 tandem repeats follow at residues Pro21–Pro29, His31–Gly39, Pro41–Pro49, Ala50–Ser59, Ala60–Pro68, Pro76–Leu84, Pro85–Gly91, and Thr92–Gly100. 2 disordered regions span residues Pro21–Gly45 and Ser59–Pro103. The tract at residues Pro21–Gly100 is 8 X 9 AA approximate tandem repeat of [AP]-P-G-G-P-Y-G-G-P-P. The span at His31–Gly45 shows a compositional bias: gly residues. Positions Ser59–Gly70 are enriched in low complexity. EF-hand domains follow at residues Asn105 to Ser140, Thr146 to Leu174, Lys172 to Asn207, Leu208 to Leu244, and Thr245 to Met274. The Ca(2+) site is built by Asp118, Asp120, Ser122, Tyr124, and Glu129. Asp185, Asp187, Ser189, Ser191, and Glu196 together coordinate Ca(2+). A required for interaction with PDCD6 region spans residues Thr195–Leu275.

In terms of assembly, heterodimer; heterodimerizes (via the EF-hand 5) with PDCD6. Dissociates from PDCD6 in presence of calcium. In terms of processing, ubiquitinated by the BCR(KLHL12) E3 ubiquitin ligase complex.

It localises to the cytoplasm. The protein localises to the endoplasmic reticulum. It is found in the membrane. Its subcellular location is the cytoplasmic vesicle. The protein resides in the COPII-coated vesicle membrane. In terms of biological role, calcium-binding protein that acts as an adapter that bridges unrelated proteins or stabilizes weak protein-protein complexes in response to calcium. Together with PDCD6, acts as a calcium-dependent adapter for the BCR(KLHL12) complex, a complex involved in endoplasmic reticulum (ER)-Golgi transport by regulating the size of COPII coats. In response to cytosolic calcium increase, the heterodimer formed with PDCD6 interacts with, and bridges together the BCR(KLHL12) complex and SEC31 (SEC31A or SEC31B), promoting monoubiquitination of SEC31 and subsequent collagen export, which is required for neural crest specification. Its role in the heterodimer formed with PDCD6 is however unclear: some evidence shows that PEF1 and PDCD6 work together and promote association between PDCD6 and SEC31 in presence of calcium. Other reports show that PEF1 dissociates from PDCD6 in presence of calcium, and may act as a negative regulator of PDCD6. Also acts as a negative regulator of ER-Golgi transport; possibly by inhibiting interaction between PDCD6 and SEC31. In Mus musculus (Mouse), this protein is Peflin.